A 783-amino-acid polypeptide reads, in one-letter code: Protein SEY1 (783 aa).

At Met1–His677 the chain is on the cytoplasmic side. The GB1/RHD3-type G domain occupies Gly33–Lys265. Gly43–Ser50 contributes to the GTP binding site. Positions His449–Thr472 form a coiled coil. The helical transmembrane segment at Ile678–Ile698 threads the bilayer. The Lumenal segment spans residues Arg699–Pro701. A helical membrane pass occupies residues Leu702 to Leu722. The Cytoplasmic portion of the chain corresponds to Trp723–Asp783.

Belongs to the TRAFAC class dynamin-like GTPase superfamily. GB1/RHD3 GTPase family. RHD3 subfamily.

The protein localises to the endoplasmic reticulum membrane. In terms of biological role, cooperates with the reticulon proteins and tubule-shaping DP1 family proteins to generate and maintain the structure of the tubular endoplasmic reticulum network. Has GTPase activity, which is required for its function in ER organization. The polypeptide is Protein SEY1 (Candida glabrata (strain ATCC 2001 / BCRC 20586 / JCM 3761 / NBRC 0622 / NRRL Y-65 / CBS 138) (Yeast)).